Here is an 86-residue protein sequence, read N- to C-terminus: Muscarinic toxin MTX6 (86 aa).

A signal peptide spans 1-21 (MKTLLLTLVVVTILCLDLGYT). Cystine bridges form between Cys-24/Cys-45, Cys-38/Cys-63, Cys-67/Cys-78, and Cys-79/Cys-84.

Belongs to the three-finger toxin family. Short-chain subfamily. Aminergic toxin sub-subfamily. As to quaternary structure, monomer. As to expression, expressed by the venom gland.

It is found in the secreted. Binds to the muscarinic acetylcholine receptor (CHRM). The sequence is that of Muscarinic toxin MTX6 from Ophiophagus hannah (King cobra).